The sequence spans 309 residues: Olfactory receptor 7A40 (309 aa).

Topologically, residues 1 to 26 are extracellular; it reads MELKNDTQISKFILLGISEDPLWQPF. N-linked (GlcNAc...) asparagine glycosylation occurs at asparagine 5. The helical transmembrane segment at 27–47 threads the bilayer; that stretch reads LFGLFLFMYLVTLLGNLLIII. Residues 48–57 are Cytoplasmic-facing; the sequence is ATITDSHLHT. A helical membrane pass occupies residues 58-78; the sequence is PMYFFLSNLSFADICFTSASI. Residues 79–97 lie on the Extracellular side of the membrane; it reads PKMLVNIQTKNKVITYEGC. A disulfide bridge links cysteine 97 with cysteine 179. The chain crosses the membrane as a helical span at residues 98-118; sequence ISQVFFFILFGVLDNFLLAVM. Residues 119 to 139 lie on the Cytoplasmic side of the membrane; that stretch reads AYDRYVAICHPLHYMVIMNCR. Residues 140–160 traverse the membrane as a helical segment; that stretch reads LCGFLVLGSWVTTALNSLLQS. The Extracellular portion of the chain corresponds to 161-196; sequence SMALRLSFCTDLKIPHFVCELNQLVLLACNDTFPND. The helical transmembrane segment at 197-217 threads the bilayer; sequence MVMYFAAILLGGGPLAGILYS. Over 218-244 the chain is Cytoplasmic; that stretch reads YSKIVSSIRAISSSQGKYKAFSTCASH. Residues 245–265 traverse the membrane as a helical segment; the sequence is LSVVSLFYSTLLGVYLSSSFT. Over 266-269 the chain is Extracellular; that stretch reads QNSH. Residues 270-292 form a helical membrane-spanning segment; sequence STARASVMYSVVTPMLNPFIYSL. At 293–309 the chain is on the cytoplasmic side; the sequence is RNKDLMGALRRLLRRKS.

This sequence belongs to the G-protein coupled receptor 1 family.

It is found in the cell membrane. Functionally, odorant receptor. The protein is Olfactory receptor 7A40 of Mus musculus (Mouse).